The sequence spans 606 residues: Thrombospondin-related anonymous protein (606 aa).

The first 24 residues, 1 to 24 (MKLLGNSKYFFVVLLLCISVFLNG), serve as a signal peptide directing secretion. Positions 43 to 228 (DLHILLDGSG…TMIKPFLSKV (186 aa)) constitute a VWFA domain. A TSP type-1 domain is found at 235–281 (VALCGKWEEWSECSTTCDNGTKIRKRKVLHPNCAGEMTAPCKVRDCP). The segment at 301–541 (PVEPIEPAEP…SKKQSKSNNG (241 aa)) is disordered. Composition is skewed to low complexity over residues 409-425 (ENPF…IIAP), 440-450 (ELPNNLPESPS), and 459-479 (PNDN…IPNK). Basic and acidic residues-rich tracts occupy residues 487–504 (NPYK…RSND) and 516–532 (DKLE…ENKS). A helical membrane pass occupies residues 544 to 564 (IAGGIIGGLAIIGCIGVGYNF).

Interacts (via integrin-like A-domain) with Anopheles gambiae saglin/SG1F; the interaction probably promotes sporozoite invasion of salivary gland. Interacts (via integrin-like A-domain) with human AHSG; the interaction promotes sporozoite invasion of hepatocytes and formation of exoerythrocytic forms of parasites in human hepatoma HepG2 cells.

It localises to the cell membrane. The protein resides in the cytoplasm. Its function is as follows. Promotes parasite ability to invade host hepatocytes. Promotes parasite ability to invade mosquito salivary glands. Required for sporozoite gliding motility. This chain is Thrombospondin-related anonymous protein, found in Plasmodium berghei (strain Anka).